The following is a 375-amino-acid chain: Platelet-derived growth factor receptor-like protein (375 aa).

A signal peptide spans 1–21; the sequence is MKVWLLLGLLLVHEALEDVTG. A disordered region spans residues 22–64; the sequence is QHLPKNKRPKEPGENRIKPTNKKVKPKIPKMKDRDSANSAPKT. Residues 40-50 show a composition bias toward basic residues; it reads PTNKKVKPKIP. The Ig-like C2-type 1 domain maps to 62-159; it reads PKTQSIMMQV…GYICRKDEAK (98 aa). Cysteine 96 and cysteine 143 are joined by a disulfide. 2 N-linked (GlcNAc...) asparagine glycosylation sites follow: asparagine 132 and asparagine 219. In terms of domain architecture, Ig-like C2-type 2 spans 272–375; sequence PSTTILASSN…TTVATTVEFS (104 aa). Cysteine 293 and cysteine 357 are joined by a disulfide.

In terms of assembly, forms a complex composed of PDGFRL, TNK2 and GRB2. In terms of tissue distribution, expressed in colon, lung and liver.

Its subcellular location is the secreted. The protein is Platelet-derived growth factor receptor-like protein (PDGFRL) of Homo sapiens (Human).